The primary structure comprises 192 residues: Thymidine kinase (192 aa).

ATP contacts are provided by residues 9-16 (SAMNAGKS) and 87-90 (DECQ). Catalysis depends on Glu-88, which acts as the Proton acceptor. Cys-145, Cys-147, Cys-182, and His-185 together coordinate Zn(2+).

This sequence belongs to the thymidine kinase family. In terms of assembly, homotetramer.

It localises to the cytoplasm. It catalyses the reaction thymidine + ATP = dTMP + ADP + H(+). This Vibrio parahaemolyticus serotype O3:K6 (strain RIMD 2210633) protein is Thymidine kinase.